Consider the following 253-residue polypeptide: Claudin domain-containing protein 1 (253 aa).

A helical membrane pass occupies residues 5 to 25; that stretch reads FATAFVIACVLSLISTIYMAA. 2 N-linked (GlcNAc...) asparagine glycosylation sites follow: Asn42 and Asn72. Helical transmembrane passes span 141-161, 175-195, and 216-236; these read FLLP…GLCA, ILHL…VAGI, and FCLA…FIWA.

Belongs to the PMP-22/EMP/MP20 family. In terms of tissue distribution, widely distributed in the adult CNS with highest expression in the corpus callosum, caudate nucleus, cerebral cortex, medulla, putamen, spinal cord, substantia nigra and subthalamic nucleus. Weak expression was detected in the adult heart.

Its subcellular location is the cell junction. It localises to the tight junction. The protein resides in the cell membrane. Plays a role in negatively regulating the permeability of cells to small molecules. The sequence is that of Claudin domain-containing protein 1 (CLDND1) from Homo sapiens (Human).